The primary structure comprises 648 residues: Forkhead box protein N1 (648 aa).

The interval 1-95 is disordered; the sequence is MVSLLPPQSD…PGPGSFRLSP (95 aa). Over residues 38–50 the composition is skewed to polar residues; that stretch reads APQNKHANFSCSS. The segment covering 54–67 has biased composition (pro residues); it reads DGPPERTPSLPPHS. Residues 271–367 constitute a DNA-binding region (fork-head); sequence KPIYSYSILI…EELQKWKRKD (97 aa). 3 disordered regions span residues 392–432, 457–521, and 629–648; these read LGSP…APGP, HLSP…TLLP, and SAAA…LALA. The span at 398–412 shows a compositional bias: pro residues; that stretch reads GCPPPGLAGPGPIRP.

Bone marrow (at protein level). Expressed in thymus and skin.

It is found in the nucleus. Transcriptional regulator which regulates the development, differentiation, and function of thymic epithelial cells (TECs) both in the prenatal and postnatal thymus. Acts as a master regulator of the TECs lineage development and is required from the onset of differentiation in progenitor TECs in the developing fetus to the final differentiation steps through which TECs mature to acquire their full functionality. Regulates, either directly or indirectly the expression of a variety of genes that mediate diverse aspects of thymus development and function, including MHC Class II, DLL4, CCL25, CTSL, CD40 and PAX1. Regulates the differentiation of the immature TECs into functional cortical TECs (cTECs) and medullary TECs (mTECs). Essential for maintenance of mTECs population in the postnatal thymus. Involved in the morphogenesis and maintenance of the three-dimensional thymic microstructure which is necessary for a fully functional thymus. Plays an important role in the maintenance of hematopoiesis and particularly T lineage progenitors within the bone marrow niche with age. Essential for the vascularization of the thymus anlage. Promotes the terminal differentiation of epithelial cells in the epidermis and hair follicles, partly by negatively regulating the activity of protein kinase C. The sequence is that of Forkhead box protein N1 (Foxn1) from Mus musculus (Mouse).